Here is a 258-residue protein sequence, read N- to C-terminus: MLILISPAKTLDYQSPLTTTRYTLPELLDNSQQLIHEARKLTPPQISSLMRISDKLAGINAARFHDWQPDFTPENARQAILAFKGDVYTGLQAETFSEDDFDFAQQHLRMLSGLYGVLRPLDLMQPYRLEMGIRLENARGKDLYQFWGDIITNKLNEALAAQGDNVVINLASDEYFKSVKPKKLNAEIIKPVFLDEKNGKFKIISFYAKKARGLMSRFIIENRLTKPEQLTGFNSEGYFFDEASSSNGELVFKRYEQR.

It belongs to the UPF0246 family.

The polypeptide is UPF0246 protein YaaA (Escherichia coli O7:K1 (strain IAI39 / ExPEC)).